Reading from the N-terminus, the 31-residue chain is Cyclotide mden-N (31 aa).

A cross-link (cyclopeptide (Gly-Asn)) is located at residues 1–31 (GTIPCGESCVYIPCLTSALGCSCKNKVCYRN). Intrachain disulfides connect Cys5–Cys21, Cys9–Cys23, and Cys14–Cys28.

The protein belongs to the cyclotide family. Bracelet subfamily. In terms of processing, this is a cyclic peptide.

Functionally, probably participates in a plant defense mechanism. The protein is Cyclotide mden-N of Melicytus dentatus (Tree violet).